The following is a 528-amino-acid chain: Ribonuclease Y (528 aa).

Residues 15-35 (SLFFLALICGSIIGYFLYSFF) traverse the membrane as a helical segment. The region spanning 217 to 277 (NISVVNIPNE…IRREIAKKTL (61 aa)) is the KH domain. The region spanning 343 to 436 (VLKHSLEVAF…VAIADTLSSA (94 aa)) is the HD domain.

This sequence belongs to the RNase Y family.

The protein resides in the cell membrane. Functionally, endoribonuclease that initiates mRNA decay. This chain is Ribonuclease Y, found in Aster yellows witches'-broom phytoplasma (strain AYWB).